A 502-amino-acid chain; its full sequence is MEIRAEEISEIIRKQIKEYGSEVEVAETGTIISIGDGIARIHGLDKAMAGELLEFPGGISGMALNLEEDNVGAAILGEFSEIKEGDTVKRTNRIVEVPVGEALIGRVVNAIGQPIDGKGPINTDKFGKVEVKAPGIVKRKSVHQPMQTGLKAIDAMVPIGRGQRELIIGDRQTGKTAVAIDTIINQKGGDVVCIYVAIGQKRSTVAQVVSKLQEHGAMDYTIIVAATASEPAPLQFISPYTGVTMGEYFRDNGKHALIIYDDLSKQAVAYRQLSLLLRRPPGREAYPGDVFYLHSRLLERACKVSDACGAGSLTALPIIETQAGDVSAYIPTNVISITDGQIYLESDLFYSGVRPAINVGLSVSRVGGSAQVKAMKQVAGTLRLSLAQYREMAAFAQFGSDLDKATQMQLARGERLVEVLKQPQYRPIPNEKQVLIIFAANNGYIDEYPVASLGRYESELYSFFDARKSDLLAELRDKKAIDDDIKAKIVSALEEFKKEFTA.

169 to 176 (GDRQTGKT) contacts ATP.

Belongs to the ATPase alpha/beta chains family. F-type ATPases have 2 components, CF(1) - the catalytic core - and CF(0) - the membrane proton channel. CF(1) has five subunits: alpha(3), beta(3), gamma(1), delta(1), epsilon(1). CF(0) has three main subunits: a(1), b(2) and c(9-12). The alpha and beta chains form an alternating ring which encloses part of the gamma chain. CF(1) is attached to CF(0) by a central stalk formed by the gamma and epsilon chains, while a peripheral stalk is formed by the delta and b chains.

The protein localises to the cell inner membrane. It carries out the reaction ATP + H2O + 4 H(+)(in) = ADP + phosphate + 5 H(+)(out). In terms of biological role, produces ATP from ADP in the presence of a proton gradient across the membrane. The alpha chain is a regulatory subunit. The sequence is that of ATP synthase subunit alpha from Geotalea daltonii (strain DSM 22248 / JCM 15807 / FRC-32) (Geobacter daltonii).